A 373-amino-acid chain; its full sequence is tRNA-specific 2-thiouridylase MnmA (373 aa).

ATP is bound by residues Gly-12–Ser-19 and Met-38. Residues Asn-98–Asp-100 form an interaction with target base in tRNA region. Catalysis depends on Cys-103, which acts as the Nucleophile. The cysteines at positions 103 and 200 are disulfide-linked. ATP is bound at residue Gly-127. Positions Lys-150–Gln-152 are interaction with tRNA. Residue Cys-200 is the Cysteine persulfide intermediate of the active site. The interaction with tRNA stretch occupies residues Arg-312–Tyr-313.

This sequence belongs to the MnmA/TRMU family.

The protein resides in the cytoplasm. It carries out the reaction S-sulfanyl-L-cysteinyl-[protein] + uridine(34) in tRNA + AH2 + ATP = 2-thiouridine(34) in tRNA + L-cysteinyl-[protein] + A + AMP + diphosphate + H(+). Its function is as follows. Catalyzes the 2-thiolation of uridine at the wobble position (U34) of tRNA, leading to the formation of s(2)U34. This is tRNA-specific 2-thiouridylase MnmA from Streptococcus pneumoniae (strain JJA).